The following is a 261-amino-acid chain: uncharacterized protein (261 aa).

4 residues coordinate NADP(+): isoleucine 33, lysine 60, aspartate 78, and asparagine 105. Serine 157 serves as the catalytic Proton donor. Tyrosine 172, lysine 176, and threonine 206 together coordinate NADP(+). Tyrosine 172 acts as the Proton acceptor in catalysis. Catalysis depends on lysine 176, which acts as the Lowers pKa of active site Tyr.

Belongs to the short-chain dehydrogenases/reductases (SDR) family.

It localises to the cytoplasm. The protein resides in the nucleus. This is an uncharacterized protein from Schizosaccharomyces pombe (strain 972 / ATCC 24843) (Fission yeast).